A 44-amino-acid chain; its full sequence is Antifungal protein R (44 aa).

Belongs to the thaumatin family.

Has antifungal activity. Inhibits the growth of Trichoderma viridae and Candida albicans. This is Antifungal protein R from Hordeum vulgare (Barley).